Here is a 502-residue protein sequence, read N- to C-terminus: Cytochrome P450 71B19 (502 aa).

Residues 1–21 form a helical membrane-spanning segment; the sequence is MAISFLCVFLITFVSLIFFAK. A heme-binding site is contributed by Cys-444.

It belongs to the cytochrome P450 family. Heme is required as a cofactor.

The protein localises to the membrane. The chain is Cytochrome P450 71B19 (CYP71B19) from Arabidopsis thaliana (Mouse-ear cress).